Reading from the N-terminus, the 171-residue chain is Adenine phosphoribosyltransferase (171 aa).

It belongs to the purine/pyrimidine phosphoribosyltransferase family. As to quaternary structure, homodimer.

It is found in the cytoplasm. It carries out the reaction AMP + diphosphate = 5-phospho-alpha-D-ribose 1-diphosphate + adenine. It participates in purine metabolism; AMP biosynthesis via salvage pathway; AMP from adenine: step 1/1. Its function is as follows. Catalyzes a salvage reaction resulting in the formation of AMP, that is energically less costly than de novo synthesis. This Rhodospirillum rubrum (strain ATCC 11170 / ATH 1.1.1 / DSM 467 / LMG 4362 / NCIMB 8255 / S1) protein is Adenine phosphoribosyltransferase.